The following is a 365-amino-acid chain: DNA polymerase IV 1 (365 aa).

Residues 6 to 196 enclose the UmuC domain; the sequence is VLHIDMDYFF…LNVSKLWGIG (191 aa). Mg(2+) is bound by residues D10 and D113. The active site involves E114.

Belongs to the DNA polymerase type-Y family. As to quaternary structure, monomer. It depends on Mg(2+) as a cofactor.

The protein localises to the cytoplasm. It carries out the reaction DNA(n) + a 2'-deoxyribonucleoside 5'-triphosphate = DNA(n+1) + diphosphate. Poorly processive, error-prone DNA polymerase involved in untargeted mutagenesis. Copies undamaged DNA at stalled replication forks, which arise in vivo from mismatched or misaligned primer ends. These misaligned primers can be extended by PolIV. Exhibits no 3'-5' exonuclease (proofreading) activity. May be involved in translesional synthesis. This Methanosarcina mazei (strain ATCC BAA-159 / DSM 3647 / Goe1 / Go1 / JCM 11833 / OCM 88) (Methanosarcina frisia) protein is DNA polymerase IV 1 (dbh1).